A 242-amino-acid chain; its full sequence is Adenylate kinase 1 (242 aa).

Residues 38-43 and G42 each bind ATP; that span reads GSGKGT. Residues 58 to 87 form an NMP region; the sequence is STGDLLREAAEKKTELGLKIKNIINEGKLV. Residues T59, R64, 85 to 87, G113, 113 to 116, and Q120 each bind AMP; these read KLV and GYPR. Residues 154-191 are LID; the sequence is GRLIHKPSGRIYHKIFNPPKVPFRDDVTNEPLIQREDD. Residues R155 and Y165 each coordinate ATP. R199 contacts AMP. Residue A229 participates in ATP binding.

It belongs to the adenylate kinase family.

The protein resides in the cytoplasm. It carries out the reaction AMP + ATP = 2 ADP. With respect to regulation, inhibited by the dinucleoside pentaphosphate compound P1,P5-di(adenosine-5') pentaphosphate (AP5A). Its function is as follows. Catalyzes the reversible transfer of the terminal phosphate group between ATP and AMP. Has very low activity with CTP, GTP, ITP and UTP and no activity with GMP, CMP, UMP or IMP in vitro. This Plasmodium falciparum (isolate 3D7) protein is Adenylate kinase 1.